The sequence spans 632 residues: tRNA uridine 5-carboxymethylaminomethyl modification enzyme MnmG (632 aa).

Residues 13 to 18 (GGGHAG), V125, and S180 each bind FAD. 273–287 (GPRYCPSIEDKVMRF) contributes to the NAD(+) binding site. Q370 contacts FAD.

The protein belongs to the MnmG family. In terms of assembly, homodimer. Heterotetramer of two MnmE and two MnmG subunits. FAD is required as a cofactor.

The protein localises to the cytoplasm. Functionally, NAD-binding protein involved in the addition of a carboxymethylaminomethyl (cmnm) group at the wobble position (U34) of certain tRNAs, forming tRNA-cmnm(5)s(2)U34. The sequence is that of tRNA uridine 5-carboxymethylaminomethyl modification enzyme MnmG from Proteus mirabilis (strain HI4320).